The following is a 158-amino-acid chain: MALLTTGKPFIRDLEQYGALGVYAPLEGGYEGRYQRRLRATGYNVLHITARGLGDLSAYLTGIHGVRPPHLGKKNIGREAAVGPVYFIPPIATYQLENLPPKSKGLVIWIIESFVLSSEEKQYLINLSQQEPRLKFVLELGGERYFRWQPLSKSLIAA.

Belongs to the complex I NdhN subunit family. In terms of assembly, NDH-1 can be composed of about 15 different subunits; different subcomplexes with different compositions have been identified which probably have different functions.

The protein resides in the cellular thylakoid membrane. It catalyses the reaction a plastoquinone + NADH + (n+1) H(+)(in) = a plastoquinol + NAD(+) + n H(+)(out). The catalysed reaction is a plastoquinone + NADPH + (n+1) H(+)(in) = a plastoquinol + NADP(+) + n H(+)(out). Its function is as follows. NDH-1 shuttles electrons from an unknown electron donor, via FMN and iron-sulfur (Fe-S) centers, to quinones in the respiratory and/or the photosynthetic chain. The immediate electron acceptor for the enzyme in this species is believed to be plastoquinone. Couples the redox reaction to proton translocation, and thus conserves the redox energy in a proton gradient. Cyanobacterial NDH-1 also plays a role in inorganic carbon-concentration. The sequence is that of NAD(P)H-quinone oxidoreductase subunit N from Microcystis aeruginosa (strain NIES-843 / IAM M-2473).